A 347-amino-acid polypeptide reads, in one-letter code: GMP reductase (347 aa).

108–131 provides a ligand contact to NADP(+); sequence ADFEKTKQILDLNPALNFVCIDVA. Positions 181 and 183 each coordinate K(+). The Thioimidate intermediate role is filled by Cys186. 216 to 239 is an NADP(+) binding site; sequence IVSDGGCTTPGDVAKAFGGGADFV.

The protein belongs to the IMPDH/GMPR family. GuaC type 1 subfamily. As to quaternary structure, homotetramer.

The catalysed reaction is IMP + NH4(+) + NADP(+) = GMP + NADPH + 2 H(+). Functionally, catalyzes the irreversible NADPH-dependent deamination of GMP to IMP. It functions in the conversion of nucleobase, nucleoside and nucleotide derivatives of G to A nucleotides, and in maintaining the intracellular balance of A and G nucleotides. This chain is GMP reductase, found in Escherichia coli O7:K1 (strain IAI39 / ExPEC).